The chain runs to 432 residues: Nematocyst expressed protein 3-like (432 aa).

Positions 1–19 are cleaved as a signal peptide; that stretch reads MRVVYLVLVVAVIIAITEA. Disulfide bonds link C52/C91, C59/C84, C73/C88, C125/C140, C157/C176, and C166/C180. 3 ShKT domains span residues 59 to 91, 107 to 143, and 149 to 183; these read CKAFGKIAKKDKKSCFNNPDKARMACPVSCKLC, VVRAMCVDIEVDQCNPDVCYTNPDWATENCRKTCMLC, and GPCDTDPRCPFWGQYGYCSTATYIDNHCPYNCDVY. Residues 235-313 show a composition bias toward low complexity; sequence GAQYPAATAA…PEAAPSEPEA (79 aa). Residues 235–432 are disordered; sequence GAQYPAATAA…KSKSGHKRHH (198 aa). Residues 314 to 330 show a composition bias toward pro residues; it reads APAPAPEMAPAPAPEMA. Residues 331-408 show a composition bias toward low complexity; it reads PAPEAASAPA…AAPSEQPMPG (78 aa). The span at 409–432 shows a compositional bias: basic residues; sequence KKSKSKPSKRKGVKKSKSGHKRHH.

Belongs to the NEP3 family. Nematocytes. In late planulae, transcripts are found throughout the ectoderm in nematocytes, with high concentration of expressing cells in the oral pole. In primary polyps, is expressed in nematocytes in the body wall and physa ectoderm and in the upper and lower pharynx.

The protein resides in the nematocyst. It localises to the secreted. Its function is as follows. Probable toxin. This chain is Nematocyst expressed protein 3-like, found in Nematostella vectensis (Starlet sea anemone).